We begin with the raw amino-acid sequence, 189 residues long: Ribonuclease HII (189 aa).

The RNase H type-2 domain occupies 1–189 (MIAGVDEAGR…PVRRALNIDC (189 aa)). 3 residues coordinate a divalent metal cation: Asp-6, Glu-7, and Asp-98.

It belongs to the RNase HII family. The cofactor is Mn(2+). Mg(2+) serves as cofactor.

The protein localises to the cytoplasm. It carries out the reaction Endonucleolytic cleavage to 5'-phosphomonoester.. Its function is as follows. Endonuclease that specifically degrades the RNA of RNA-DNA hybrids. This Acinetobacter baylyi (strain ATCC 33305 / BD413 / ADP1) protein is Ribonuclease HII.